The sequence spans 529 residues: Bifunctional purine biosynthesis protein PurH (529 aa).

Positions 1-148 constitute an MGS-like domain; it reads MNNARPIRRA…KNHKDTTIIV (148 aa).

Belongs to the PurH family.

The enzyme catalyses (6R)-10-formyltetrahydrofolate + 5-amino-1-(5-phospho-beta-D-ribosyl)imidazole-4-carboxamide = 5-formamido-1-(5-phospho-D-ribosyl)imidazole-4-carboxamide + (6S)-5,6,7,8-tetrahydrofolate. It catalyses the reaction IMP + H2O = 5-formamido-1-(5-phospho-D-ribosyl)imidazole-4-carboxamide. Its pathway is purine metabolism; IMP biosynthesis via de novo pathway; 5-formamido-1-(5-phospho-D-ribosyl)imidazole-4-carboxamide from 5-amino-1-(5-phospho-D-ribosyl)imidazole-4-carboxamide (10-formyl THF route): step 1/1. It functions in the pathway purine metabolism; IMP biosynthesis via de novo pathway; IMP from 5-formamido-1-(5-phospho-D-ribosyl)imidazole-4-carboxamide: step 1/1. This is Bifunctional purine biosynthesis protein PurH from Shewanella halifaxensis (strain HAW-EB4).